The primary structure comprises 257 residues: 5-oxoprolinase subunit A (257 aa).

It belongs to the LamB/PxpA family. In terms of assembly, forms a complex composed of PxpA, PxpB and PxpC.

It catalyses the reaction 5-oxo-L-proline + ATP + 2 H2O = L-glutamate + ADP + phosphate + H(+). In terms of biological role, catalyzes the cleavage of 5-oxoproline to form L-glutamate coupled to the hydrolysis of ATP to ADP and inorganic phosphate. This is 5-oxoprolinase subunit A from Bacillus subtilis (strain 168).